Here is a 345-residue protein sequence, read N- to C-terminus: Tyrosine--tRNA ligase (345 aa).

Residue Tyr36 participates in L-tyrosine binding. The 'HIGH' region signature appears at 41-49 (PTGEMHIGH). L-tyrosine is bound by residues Tyr163, Gln167, Asp170, and Gln185.

Belongs to the class-I aminoacyl-tRNA synthetase family. TyrS type 3 subfamily. Homodimer.

It is found in the cytoplasm. It carries out the reaction tRNA(Tyr) + L-tyrosine + ATP = L-tyrosyl-tRNA(Tyr) + AMP + diphosphate + H(+). Catalyzes the attachment of tyrosine to tRNA(Tyr) in a two-step reaction: tyrosine is first activated by ATP to form Tyr-AMP and then transferred to the acceptor end of tRNA(Tyr). This is Tyrosine--tRNA ligase from Natronomonas pharaonis (strain ATCC 35678 / DSM 2160 / CIP 103997 / JCM 8858 / NBRC 14720 / NCIMB 2260 / Gabara) (Halobacterium pharaonis).